Consider the following 246-residue polypeptide: NH(3)-dependent NAD(+) synthetase (246 aa).

ATP is bound at residue 29–36 (GLSGGIDS). Asp35 is a Mg(2+) binding site. A deamido-NAD(+)-binding site is contributed by Arg110. Thr130 contributes to the ATP binding site. Residue Glu135 participates in Mg(2+) binding. Residues Lys159 and Ser181 each coordinate ATP.

The protein belongs to the NAD synthetase family. In terms of assembly, homodimer.

The enzyme catalyses deamido-NAD(+) + NH4(+) + ATP = AMP + diphosphate + NAD(+) + H(+). It participates in cofactor biosynthesis; NAD(+) biosynthesis; NAD(+) from deamido-NAD(+) (ammonia route): step 1/1. Its function is as follows. Catalyzes the ATP-dependent amidation of deamido-NAD to form NAD. Uses ammonia as a nitrogen source. The sequence is that of NH(3)-dependent NAD(+) synthetase from Campylobacter jejuni subsp. jejuni serotype O:2 (strain ATCC 700819 / NCTC 11168).